The primary structure comprises 197 residues: Casparian strip membrane protein 5 (197 aa).

The Cytoplasmic portion of the chain corresponds to 1–34 (MSTTIDMPGSSKAAKAGKPVLVTTPSRPGGWKKG). The helical transmembrane segment at 35 to 55 (VAIMDFILRLGAIAAALGAAA) threads the bilayer. The Extracellular portion of the chain corresponds to 56–84 (TMGLSDQTLPFFTQFFQFEASYDSFTTFQ). The chain crosses the membrane as a helical span at residues 85–105 (FFVITMALVAGYLVLSLPLSI). The Cytoplasmic segment spans residues 106-117 (VAVVRPHAAGPR). Residues 118 to 138 (LFLIILDTVFLTLATASGASA) form a helical membrane-spanning segment. Residues 139 to 171 (ASIVYLAHNGNQDTNWIAICNQFGDFCAQTSGA) are Extracellular-facing. The chain crosses the membrane as a helical span at residues 172–192 (VVSSLVAVLVFVLLIVMSALV). The Cytoplasmic portion of the chain corresponds to 193 to 197 (LGKKH).

The protein belongs to the Casparian strip membrane proteins (CASP) family. In terms of assembly, homodimer and heterodimers.

It is found in the cell membrane. Functionally, regulates membrane-cell wall junctions and localized cell wall deposition. Required for establishment of the Casparian strip membrane domain (CSD) and the subsequent formation of Casparian strips, a cell wall modification of the root endodermis that determines an apoplastic barrier between the intraorganismal apoplasm and the extraorganismal apoplasm and prevents lateral diffusion. The chain is Casparian strip membrane protein 5 from Lotus japonicus (Lotus corniculatus var. japonicus).